Consider the following 359-residue polypeptide: 3-dehydroquinate synthase (359 aa).

Residues 71 to 76 (DGEQYK), 105 to 109 (GVIGD), 129 to 130 (TT), Lys142, Lys151, and 169 to 172 (CLST) each bind NAD(+). Zn(2+)-binding residues include Glu184, His247, and His264.

This sequence belongs to the sugar phosphate cyclases superfamily. Dehydroquinate synthase family. It depends on Co(2+) as a cofactor. Requires Zn(2+) as cofactor. The cofactor is NAD(+).

Its subcellular location is the cytoplasm. It carries out the reaction 7-phospho-2-dehydro-3-deoxy-D-arabino-heptonate = 3-dehydroquinate + phosphate. Its pathway is metabolic intermediate biosynthesis; chorismate biosynthesis; chorismate from D-erythrose 4-phosphate and phosphoenolpyruvate: step 2/7. Functionally, catalyzes the conversion of 3-deoxy-D-arabino-heptulosonate 7-phosphate (DAHP) to dehydroquinate (DHQ). This Shewanella halifaxensis (strain HAW-EB4) protein is 3-dehydroquinate synthase.